Reading from the N-terminus, the 1335-residue chain is MESEMLQSPLLGLGEEDEADLTDWNLPLAFMKKRHCEKIEGSKSLAQSWRMKDRMKTVSVALVLCLNVGVDPPDVVKTTPCARLECWIDPLSMGPQKALETIGANLQKQYENWQPRARYKQSLDPTVDEVKKLCTSLRRNAKEERVLFHYNGHGVPRPTVNGEVWVFNKNYTQYIPLSIYDLQTWMGSPSIFVYDCSNAGLIVKSFKQFALQREQELEVAAINPNHPLAQMPLPPSMKNCIQLAACEATELLPMIPDLPADLFTSCLTTPIKIALRWFCMQKCVSLVPGVTLDLIEKIPGRLNDRRTPLGELNWIFTAITDTIAWNVLPRDLFQKLFRQDLLVASLFRNFLLAERIMRSYNCTPVSSPRLPPTYMHAMWQAWDLAVDICLSQLPTIIEEGTAFRHSPFFAEQLTAFQVWLTMGVENRNPPEQLPIVLQVLLSQVHRLRALDLLGRFLDLGPWAVSLALSVGIFPYVLKLLQSSARELRPLLVFIWAKILAVDSSCQADLVKDNGHKYFLSVLADPYMPAEHRTMTAFILAVIVNSYHTGQEACLQGNLIAICLEQLNDPHPLLRQWVAICLGRIWQNFDSARWCGVRDSAHEKLYSLLSDPIPEVRCAAVFALGTFVGNSAERTDHSTTIDHNVAMMLAQLVSDGSPMVRKELVVALSHLVVQYESNFCTVALQFIEEEKNYALPSPATTEGGSLTPVRDSPCTPRLRSVSSYGNIRAVATARSLNKSLQNLSLTEESGGAVAFSPGNLSTSSSASSTLGSPENEEHILSFETIDKMRRASSYSSLNSLIGVSFNSVYTQIWRVLLHLAADPYPEVSDVAMKVLNSIAYKATVNARPQRVLDTSSLTQSAPASPTNKGVHIHQAGGSPPASSTSSSSLTNDVAKQPVSRDLPSGRPGTTGPAGAQYTPHSHQFPRTRKMFDKGPEQTADDADDAAGHKSFISATVQTGFCDWSARYFAQPVMKIPEEHDLESQIRKEREWRFLRNSRVRRQAQQVIQKGITRLDDQIFLNRNPGVPSVVKFHPFTPCIAVADKDSICFWDWEKGEKLDYFHNGNPRYTRVTAMEYLNGQDCSLLLTATDDGAIRVWKNFADLEKNPEMVTAWQGLSDMLPTTRGAGMVVDWEQETGLLMSSGDVRIVRIWDTDREMKVQDIPTGADSCVTSLSCDSHRSLIVAGLGDGSIRVYDRRMALSECRVMTYREHTAWVVKASLQKRPDGHIVSVSVNGDVRIFDPRMPESVNVLQIVKGLTALDIHPQADLIACGSVNQFTAIYNSSGELINNIKYYDGFMGQRVGAISCLAFHPHWPHLAVGSNDYYISVYSVEKRVR.

2 positions are modified to phosphoserine: serine 44 and serine 122. The residue at position 696 (serine 696) is a Phosphoserine; by MAPK8. Threonine 700 carries an O-linked (GlcNAc) threonine glycan. At threonine 706 the chain carries Phosphothreonine; by MAPK8. Residues serine 719 and serine 721 each carry the phosphoserine; by RPS6KA1 modification. Residue serine 722 is modified to Phosphoserine; by AMPK and RPS6KA1. Serine 738 carries the post-translational modification Phosphoserine. Serine 791 is modified (phosphoserine; by PKA). Serine 792 carries the phosphoserine; by AMPK modification. Phosphoserine is present on residues serine 836 and serine 855. The disordered stretch occupies residues 850–943 (VLDTSSLTQS…PEQTADDADD (94 aa)). Residues 851-866 (LDTSSLTQSAPASPTN) are compositionally biased toward polar residues. At serine 859 the chain carries Phosphoserine; by MTOR. Serine 863 carries the post-translational modification Phosphoserine; by MAPK8, MTOR and NLK. Threonine 865 is subject to Phosphothreonine. Residues 874-887 (AGGSPPASSTSSSS) are compositionally biased toward low complexity. At serine 877 the chain carries Phosphoserine; by TBK1. Glycyl lysine isopeptide (Lys-Gly) (interchain with G-Cter in ubiquitin) cross-links involve residues lysine 932 and lysine 948. Phosphoserine is present on serine 982. WD repeat units follow at residues 1020–1061 (NRNP…DYFH), 1065–1106 (PRYT…EKNP), 1121–1160 (TTRGAGMVVDWEQETGLLMSSGDVRIVRIWDTDREMKVQD), 1164–1203 (GADSCVTSLSCDSHRSLIVAGLGDGSIRVYDRRMALSECR), 1209–1249 (EHTA…SVNV), 1251–1291 (QIVK…NNIK), and 1299–1335 (QRVGAISCLAFHPHWPHLAVGSNDYYISVYSVEKRVR). Lysine 1097 carries the post-translational modification N6-acetyllysine.

It belongs to the WD repeat RAPTOR family. As to quaternary structure, part of the mechanistic target of rapamycin complex 1 (mTORC1) which contains MTOR, MLST8 and RPTOR. mTORC1 associates with AKT1S1/PRAS40, which inhibits its activity. mTORC1 associates with DEPTOR, which regulates its activity. mTORC1 binds to and is inhibited by FKBP12-rapamycin. Forms a complex with MTOR under both leucine-rich and -poor conditions. Interacts with (via TOS motifs) EIF4EBP1 and RPS6KB1; interaction is independent of its association with MTOR. Binds preferentially to poorly or non-phosphorylated forms of EIF4EBP1, and this binding is critical to the ability of MTOR to catalyze phosphorylation. Interacts with ULK1 in a nutrient-dependent manner; the interaction is reduced during starvation. Interacts with GTP-bound form of RagA/RRAGA or RagB/RRAGB and GDP-bound form of RagC/RRAGC or RagD/RRAGD, promoting recruitment of mTORC1 to the lysosomes. Interacts (when phosphorylated by AMPK) with 14-3-3 protein, leading to inhibition of its activity. Interacts with SPAG5; SPAG5 competes with MTOR for RPTOR-binding, resulting in decreased mTORC1 formation. Interacts with WAC; WAC positively regulates MTOR activity by promoting the assembly of the TTT complex composed of TELO2, TTI1 and TTI2 and the RUVBL complex composed of RUVBL1 and RUVBL2 into the TTT-RUVBL complex which leads to the dimerization of the mTORC1 complex and its subsequent activation. Interacts with G3BP1. The complex formed with G3BP1 and SPAG5 is increased by oxidative stress. Interacts with HTR6. Interacts with PIH1D1. Interacts with LARP1. Interacts with BRAT1. Interacts with SIK3. Interacts with SLC38A7; this interaction mediates the recruitment of mTORC1 to the lysosome and its subsequent activation. In terms of assembly, (Microbial infection) Interacts with vaccinia virus protein F17; this interaction dysregulates mTOR. In terms of processing, insulin-stimulated phosphorylation at Ser-863 by MTOR and MAPK8 regulates mTORC1 activity. Phosphorylated at Ser-863 by NLK in response to stress, disrupting the interaction with small GTPases Rag (RagA/RRAGA, RagB/RRAGB, RagC/RRAGC and/or RagD/RRAGD), thereby preventing lysosome recruitment and activation of the mTORC1 complex. Osmotic stress also induces phosphorylation at Ser-696, Thr-706 and Ser-863 by MAPK8. Ser-863 phosphorylation is required for phosphorylation at Ser-855 and Ser-859. In response to nutrient limitation, phosphorylated at Ser-722 and Ser-792 by AMPK; phosphorylation promotes interaction with 14-3-3 proteins, leading to negative regulation of the mTORC1 complex. Phosphorylation at Ser-722 and Ser-792 by AMPK in response to glucose starvation inhibits O-GlcNAcylation by OGT and subsequent activation of mTORC1. In response to growth factors, phosphorylated at Ser-719, Ser-721 and Ser-722 by RPS6KA1, which stimulates mTORC1 activity. Phosphorylation at Ser-791 by PKA downstream of cAMP inhibits the mTORC1 complex. Phosphorylated at Ser-877 by TBK1, leading to negative regulation of the mTORC1 complex. Post-translationally, O-GlcNAcylated by OGT upon glucose sufficiency, promoting interaction with small GTPases Rag (RagA/RRAGA, RagB/RRAGB, RagC/RRAGC and/or RagD/RRAGD) and subsequent recruitment of mTORC1 to lysosomal membranes, leading to activation of the mTORC1 complex. Phosphorylation at Ser-722 and Ser-792 by AMPK in response to glucose starvation inhibits O-GlcNAcylation. Acetylation at Lys-1097 by EP300/p300 in response to leucine metabolite acetyl-coA promotes its activity, leading to activation of the mTORC1 complex. Acetylation is decreased in response to fasting. In terms of processing, ubiquitinated, leading to its degradation by the proteasome. Deubiquitinated by OTUB1 via a non-catalytic mechanism. Ubiquitinated by an E3 ubiquitin ligase complex containing VHL. Highly expressed in skeletal muscle, and in a lesser extent in brain, lung, small intestine, kidney and placenta. In terms of tissue distribution, widely expressed, with highest levels in nasal mucosa and pituitary and lowest in spleen.

The protein resides in the lysosome membrane. It is found in the cytoplasm. The protein localises to the cytoplasmic granule. Its function is as follows. Component of the mechanistic target of rapamycin complex 1 (mTORC1), an evolutionarily conserved central nutrient sensor that stimulates anabolic reactions and macromolecule biosynthesis to promote cellular biomass generation and growth. In response to nutrients, growth factors or amino acids, mTORC1 is recruited to the lysosome membrane and promotes protein, lipid and nucleotide synthesis by phosphorylating several substrates, such as ribosomal protein S6 kinase (RPS6KB1 and RPS6KB2) and EIF4EBP1 (4E-BP1). In the same time, it inhibits catabolic pathways by phosphorylating the autophagy initiation components ULK1 and ATG13, as well as transcription factor TFEB, a master regulators of lysosomal biogenesis and autophagy. The mTORC1 complex is inhibited in response to starvation and amino acid depletion. Within the mTORC1 complex, RPTOR acts both as a molecular adapter, which (1) mediates recruitment of mTORC1 to lysosomal membranes via interaction with small GTPases Rag (RagA/RRAGA, RagB/RRAGB, RagC/RRAGC and/or RagD/RRAGD), and a (2) substrate-specific adapter, which promotes substrate specificity by binding to TOS motif-containing proteins and direct them towards the active site of the MTOR kinase domain for phosphorylation. mTORC1 complex regulates many cellular processes, such as odontoblast and osteoclast differentiation or neuronal transmission. mTORC1 complex in excitatory neuronal transmission is required for the prosocial behavior induced by the psychoactive substance lysergic acid diethylamide (LSD). The protein is Regulatory-associated protein of mTOR of Homo sapiens (Human).